A 272-amino-acid polypeptide reads, in one-letter code: 2-dehydro-3-deoxyphosphooctonate aldolase (272 aa).

This sequence belongs to the KdsA family.

The protein localises to the cytoplasm. The enzyme catalyses D-arabinose 5-phosphate + phosphoenolpyruvate + H2O = 3-deoxy-alpha-D-manno-2-octulosonate-8-phosphate + phosphate. The protein operates within carbohydrate biosynthesis; 3-deoxy-D-manno-octulosonate biosynthesis; 3-deoxy-D-manno-octulosonate from D-ribulose 5-phosphate: step 2/3. It functions in the pathway bacterial outer membrane biogenesis; lipopolysaccharide biosynthesis. The chain is 2-dehydro-3-deoxyphosphooctonate aldolase from Trichlorobacter lovleyi (strain ATCC BAA-1151 / DSM 17278 / SZ) (Geobacter lovleyi).